Reading from the N-terminus, the 305-residue chain is Ornithine carbamoyltransferase (305 aa).

Residues 54–57, Q81, R105, and 132–135 each bind carbamoyl phosphate; these read STRT and HPCQ. Residues N163, D220, and 224–225 each bind L-ornithine; that span reads SM. Carbamoyl phosphate is bound by residues 260–261 and R288; that span reads CL.

The protein belongs to the aspartate/ornithine carbamoyltransferase superfamily. OTCase family.

The protein localises to the cytoplasm. The catalysed reaction is carbamoyl phosphate + L-ornithine = L-citrulline + phosphate + H(+). The protein operates within amino-acid biosynthesis; L-arginine biosynthesis; L-arginine from L-ornithine and carbamoyl phosphate: step 1/3. Its function is as follows. Reversibly catalyzes the transfer of the carbamoyl group from carbamoyl phosphate (CP) to the N(epsilon) atom of ornithine (ORN) to produce L-citrulline. This is Ornithine carbamoyltransferase from Chromohalobacter salexigens (strain ATCC BAA-138 / DSM 3043 / CIP 106854 / NCIMB 13768 / 1H11).